Consider the following 779-residue polypeptide: Phosphoribosylformylglycinamidine synthase subunit PurL (779 aa).

Residue H52 is part of the active site. Y55 and K94 together coordinate ATP. E96 lines the Mg(2+) pocket. Substrate is bound by residues 97 to 100 and R119; that span reads SHNH. Catalysis depends on H98, which acts as the Proton acceptor. D120 contacts Mg(2+). Q243 contributes to the substrate binding site. A Mg(2+)-binding site is contributed by D271. 315–317 serves as a coordination point for substrate; sequence ESQ. The ATP site is built by N523 and G560. Residue N561 coordinates Mg(2+). Position 563 (S563) interacts with substrate.

This sequence belongs to the FGAMS family. In terms of assembly, monomer. Part of the FGAM synthase complex composed of 1 PurL, 1 PurQ and 2 PurS subunits.

Its subcellular location is the cytoplasm. The catalysed reaction is N(2)-formyl-N(1)-(5-phospho-beta-D-ribosyl)glycinamide + L-glutamine + ATP + H2O = 2-formamido-N(1)-(5-O-phospho-beta-D-ribosyl)acetamidine + L-glutamate + ADP + phosphate + H(+). It functions in the pathway purine metabolism; IMP biosynthesis via de novo pathway; 5-amino-1-(5-phospho-D-ribosyl)imidazole from N(2)-formyl-N(1)-(5-phospho-D-ribosyl)glycinamide: step 1/2. Its function is as follows. Part of the phosphoribosylformylglycinamidine synthase complex involved in the purines biosynthetic pathway. Catalyzes the ATP-dependent conversion of formylglycinamide ribonucleotide (FGAR) and glutamine to yield formylglycinamidine ribonucleotide (FGAM) and glutamate. The FGAM synthase complex is composed of three subunits. PurQ produces an ammonia molecule by converting glutamine to glutamate. PurL transfers the ammonia molecule to FGAR to form FGAM in an ATP-dependent manner. PurS interacts with PurQ and PurL and is thought to assist in the transfer of the ammonia molecule from PurQ to PurL. In Prochlorococcus marinus (strain MIT 9515), this protein is Phosphoribosylformylglycinamidine synthase subunit PurL.